Consider the following 276-residue polypeptide: 2-dehydro-3-deoxyphosphooctonate aldolase (276 aa).

It belongs to the KdsA family.

The protein resides in the cytoplasm. The enzyme catalyses D-arabinose 5-phosphate + phosphoenolpyruvate + H2O = 3-deoxy-alpha-D-manno-2-octulosonate-8-phosphate + phosphate. Its pathway is carbohydrate biosynthesis; 3-deoxy-D-manno-octulosonate biosynthesis; 3-deoxy-D-manno-octulosonate from D-ribulose 5-phosphate: step 2/3. It functions in the pathway bacterial outer membrane biogenesis; lipopolysaccharide biosynthesis. The polypeptide is 2-dehydro-3-deoxyphosphooctonate aldolase (Chelativorans sp. (strain BNC1)).